Consider the following 439-residue polypeptide: Lipid-A-disaccharide synthase (439 aa).

Positions 1 to 35 (MKEIGNRESGIVDGQRNGASVGSDPTALPIPHSPL) are disordered.

The protein belongs to the LpxB family.

It catalyses the reaction a lipid X + a UDP-2-N,3-O-bis[(3R)-3-hydroxyacyl]-alpha-D-glucosamine = a lipid A disaccharide + UDP + H(+). Its pathway is bacterial outer membrane biogenesis; LPS lipid A biosynthesis. In terms of biological role, condensation of UDP-2,3-diacylglucosamine and 2,3-diacylglucosamine-1-phosphate to form lipid A disaccharide, a precursor of lipid A, a phosphorylated glycolipid that anchors the lipopolysaccharide to the outer membrane of the cell. In Xanthomonas euvesicatoria pv. vesicatoria (strain 85-10) (Xanthomonas campestris pv. vesicatoria), this protein is Lipid-A-disaccharide synthase.